The following is a 212-amino-acid chain: MFIIGLTGGIASGKSTVAGILKDLGAIIIDTDRVAREVVAPGRPAYREIVAAFGPRVLRPDGQLDRPALARIIFNDATARELLNAITHPRIRELVQKRLEDLRRANPEAIVVIEAPLLFEAGMEGMVDAVWAVTAPAPVRLKRLMARDKLSLAEAESRLRAQGEETARLRRATRVIPTGGDLEATRASVRAAWQELQRHLADDPEPGGAPWV.

The DPCK domain occupies 3–207; sequence IIGLTGGIAS…RHLADDPEPG (205 aa). An ATP-binding site is contributed by 11-16; sequence ASGKST.

This sequence belongs to the CoaE family.

It is found in the cytoplasm. The catalysed reaction is 3'-dephospho-CoA + ATP = ADP + CoA + H(+). Its pathway is cofactor biosynthesis; coenzyme A biosynthesis; CoA from (R)-pantothenate: step 5/5. Catalyzes the phosphorylation of the 3'-hydroxyl group of dephosphocoenzyme A to form coenzyme A. This is Dephospho-CoA kinase from Moorella thermoacetica (strain ATCC 39073 / JCM 9320).